Consider the following 880-residue polypeptide: Protein translocase subunit SecA (880 aa).

ATP-binding positions include glutamine 87, 105-109 (GEGKT), and aspartate 501. Cysteine 864, cysteine 866, cysteine 875, and histidine 876 together coordinate Zn(2+).

Belongs to the SecA family. As to quaternary structure, monomer and homodimer. Part of the essential Sec protein translocation apparatus which comprises SecA, SecYEG and auxiliary proteins SecDF-YajC and YidC. The cofactor is Zn(2+).

It is found in the cell inner membrane. The protein resides in the cytoplasm. The catalysed reaction is ATP + H2O + cellular proteinSide 1 = ADP + phosphate + cellular proteinSide 2.. Its function is as follows. Part of the Sec protein translocase complex. Interacts with the SecYEG preprotein conducting channel. Has a central role in coupling the hydrolysis of ATP to the transfer of proteins into and across the cell membrane, serving both as a receptor for the preprotein-SecB complex and as an ATP-driven molecular motor driving the stepwise translocation of polypeptide chains across the membrane. The protein is Protein translocase subunit SecA of Orientia tsutsugamushi (strain Boryong) (Rickettsia tsutsugamushi).